The chain runs to 479 residues: UDP-glycosyltransferase 85A8 (479 aa).

Residues serine 302, 358–359 (WC), 376–384 (HSGWNSTIE), and 398–401 (FAEQ) each bind UDP-alpha-D-glucose.

Belongs to the UDP-glycosyltransferase family.

Functionally, may glycosylate diterpenes or flavonols in leaves. The chain is UDP-glycosyltransferase 85A8 from Stevia rebaudiana (Stevia).